A 178-amino-acid polypeptide reads, in one-letter code: MGVLDIAKGMGVTLGKLFQKPLTVSYPEQRATLQPRFRGRHVLTRHPDTGLEKCIGCSLCAAACPAYAIYVEAAENDPRDPVSPGERYAKVYEINMLRCIFCGLCEEACPTGAVVLGNEFEMADYRSRDFVYGKEDMLVGVTGSRPQRREALSAGRPVRLGFQVEGGPRAELEGVEYP.

4Fe-4S ferredoxin-type domains follow at residues arginine 45–alanine 74 and lysine 90–glutamate 119. The [4Fe-4S] cluster site is built by cysteine 54, cysteine 57, cysteine 60, cysteine 64, cysteine 99, cysteine 102, cysteine 105, and cysteine 109.

This sequence belongs to the complex I 23 kDa subunit family. NDH-1 is composed of 15 different subunits. Subunits NuoA, H, J, K, L, M, N constitute the membrane sector of the complex. The cofactor is [4Fe-4S] cluster.

The protein resides in the cell membrane. The enzyme catalyses a quinone + NADH + 5 H(+)(in) = a quinol + NAD(+) + 4 H(+)(out). NDH-1 shuttles electrons from NADH, via FMN and iron-sulfur (Fe-S) centers, to quinones in the respiratory chain. The immediate electron acceptor for the enzyme in this species is believed to be ubiquinone. Couples the redox reaction to proton translocation (for every two electrons transferred, four hydrogen ions are translocated across the cytoplasmic membrane), and thus conserves the redox energy in a proton gradient. In Deinococcus radiodurans (strain ATCC 13939 / DSM 20539 / JCM 16871 / CCUG 27074 / LMG 4051 / NBRC 15346 / NCIMB 9279 / VKM B-1422 / R1), this protein is NADH-quinone oxidoreductase subunit I.